The chain runs to 127 residues: Fluoride-specific ion channel FluC (127 aa).

Transmembrane regions (helical) follow at residues 8-28, 37-57, 68-88, and 100-120; these read LLIA…QYWF, PWGT…VYAI, WKFL…TFSY, and ILFL…AFAG. Gly-78 and Thr-81 together coordinate Na(+).

This sequence belongs to the fluoride channel Fluc/FEX (TC 1.A.43) family.

It localises to the cell inner membrane. The enzyme catalyses fluoride(in) = fluoride(out). Na(+) is not transported, but it plays an essential structural role and its presence is essential for fluoride channel function. Functionally, fluoride-specific ion channel. Important for reducing fluoride concentration in the cell, thus reducing its toxicity. This is Fluoride-specific ion channel FluC from Leptospira interrogans serogroup Icterohaemorrhagiae serovar copenhageni (strain Fiocruz L1-130).